Consider the following 115-residue polypeptide: Phosphoribosyl-AMP cyclohydrolase (115 aa).

D80 is a Mg(2+) binding site. C81 contributes to the Zn(2+) binding site. Mg(2+)-binding residues include D82 and D84. The Zn(2+) site is built by C97 and C104.

Belongs to the PRA-CH family. In terms of assembly, homodimer. Requires Mg(2+) as cofactor. Zn(2+) serves as cofactor.

It localises to the cytoplasm. The catalysed reaction is 1-(5-phospho-beta-D-ribosyl)-5'-AMP + H2O = 1-(5-phospho-beta-D-ribosyl)-5-[(5-phospho-beta-D-ribosylamino)methylideneamino]imidazole-4-carboxamide. It participates in amino-acid biosynthesis; L-histidine biosynthesis; L-histidine from 5-phospho-alpha-D-ribose 1-diphosphate: step 3/9. Its function is as follows. Catalyzes the hydrolysis of the adenine ring of phosphoribosyl-AMP. This is Phosphoribosyl-AMP cyclohydrolase from Mycobacterium avium (strain 104).